Reading from the N-terminus, the 500-residue chain is Glutelin type-B 5 (500 aa).

The signal sequence occupies residues 1-24; it reads MATIAFSRLSIYFCVLLLCHGSMA. 2 cysteine pairs are disulfide-bonded: C45–C78 and C121–C310. 2 consecutive Cupin type-1 domains span residues 50–245 and 316–465; these read LQAF…LVAK and LNIE…EQAR.

The protein belongs to the 11S seed storage protein (globulins) family. Hexamer; each subunit is composed of an acidic and a basic chain derived from a single precursor and linked by a disulfide bond.

Seed storage protein. The polypeptide is Glutelin type-B 5 (GLUB5) (Oryza sativa subsp. japonica (Rice)).